The chain runs to 226 residues: Ribonuclease 3 (226 aa).

In terms of domain architecture, RNase III spans Leu-7–Asp-129. Residue Glu-42 coordinates Mg(2+). The active site involves Asp-46. Residues Asp-115 and Glu-118 each coordinate Mg(2+). Glu-118 is an active-site residue. Positions Asp-156–Lys-226 constitute a DRBM domain.

The protein belongs to the ribonuclease III family. As to quaternary structure, homodimer. Mg(2+) serves as cofactor.

The protein localises to the cytoplasm. It catalyses the reaction Endonucleolytic cleavage to 5'-phosphomonoester.. Digests double-stranded RNA. Involved in the processing of primary rRNA transcript to yield the immediate precursors to the large and small rRNAs (23S and 16S). Processes some mRNAs, and tRNAs when they are encoded in the rRNA operon. Processes pre-crRNA and tracrRNA of type II CRISPR loci if present in the organism. The protein is Ribonuclease 3 of Shewanella sp. (strain W3-18-1).